The sequence spans 81 residues: Small ribosomal subunit protein bS16 (81 aa).

This sequence belongs to the bacterial ribosomal protein bS16 family.

This chain is Small ribosomal subunit protein bS16, found in Treponema denticola (strain ATCC 35405 / DSM 14222 / CIP 103919 / JCM 8153 / KCTC 15104).